Consider the following 251-residue polypeptide: Putative F-box protein L166 (251 aa).

The F-box domain occupies 1–46 (MDNICELFDEILPLIIEYLSDHDKVKFMTTCSRLYYFIDKVYYENI). Residues 188–251 (PEPESQENFR…RPKSFMKYRR (64 aa)) form a disordered region. Over residues 202–217 (TESNNNKPVNKSQPQI) the composition is skewed to polar residues. Over residues 241–251 (KRPKSFMKYRR) the composition is skewed to basic residues.

The protein is Putative F-box protein L166 of Acanthamoeba polyphaga (Amoeba).